Reading from the N-terminus, the 312-residue chain is MIEFEKPNITVVEQEDSYGKFVVEPLERGFGTTLGNSLRRVLLTSIPGTGLVYVQIDGVLHEFSTVPGVREDVTKIILNLKKLELKSLSDEQKVIELDVEGPATVTADDLKVDADVQVLNPDQYICTIAEGGHLHMELAVKNGRGYVAASDNKSDDMPIGVIPVDSLFSPIKKVNYQVESTRVGKRDDFDKLTFEIWTDGSIKPNDALSFAAKILVEHFKVFESADANTKFSEVMVEKEDDKKEKKLEMTIEELDLSVRSYNCLKRAGINTLQELTDKTESDMMRVRNLGRKSLEEVKNKLTDLGLSLRQED.

Residues 1–226 form an alpha N-terminal domain (alpha-NTD) region; that stretch reads MIEFEKPNIT…EHFKVFESAD (226 aa). The tract at residues 243–312 is alpha C-terminal domain (alpha-CTD); that stretch reads KEKKLEMTIE…DLGLSLRQED (70 aa).

The protein belongs to the RNA polymerase alpha chain family. As to quaternary structure, homodimer. The RNAP catalytic core consists of 2 alpha, 1 beta, 1 beta' and 1 omega subunit. When a sigma factor is associated with the core the holoenzyme is formed, which can initiate transcription.

It carries out the reaction RNA(n) + a ribonucleoside 5'-triphosphate = RNA(n+1) + diphosphate. Functionally, DNA-dependent RNA polymerase catalyzes the transcription of DNA into RNA using the four ribonucleoside triphosphates as substrates. This is DNA-directed RNA polymerase subunit alpha from Lactobacillus acidophilus (strain ATCC 700396 / NCK56 / N2 / NCFM).